A 201-amino-acid polypeptide reads, in one-letter code: Glutathione peroxidase 1, mitochondrial (201 aa).

Residues 1-27 (MLLTRKNVAVRPARAARRDVRAMSLLG) constitute a mitochondrion transit peptide. The active site involves U75. Residue U75 is a non-standard amino acid, selenocysteine.

It localises to the mitochondrion. The catalysed reaction is 2 glutathione + H2O2 = glutathione disulfide + 2 H2O. May constitute a glutathione peroxidase-like protective system against oxidative stresses. Hydrogen peroxide, tert-butyl hydroperoxide and cumene, but not phosphatidylcholine hydroperoxide, can act as acceptors. The chain is Glutathione peroxidase 1, mitochondrial from Chlamydomonas reinhardtii (Chlamydomonas smithii).